Consider the following 232-residue polypeptide: Lipid A 1-phosphatase (232 aa).

The next 6 helical transmembrane spans lie at 10 to 30, 42 to 62, 80 to 100, 136 to 156, 160 to 180, and 183 to 203; these read LFITINAVALSMLLFDAPVGA, ELLTGFGDSAWLICISILLFF, ALYVSWIGAYLFTTVVFSGLL, FPSGHSTTVGAFFAAFALLFP, VAFIACAIWLGMTRVMVGAHY, and DVIAGLAFGGWFSLLTAIVYA.

It belongs to the lipid A LpxE 1-phosphatase family.

It localises to the cell inner membrane. The protein operates within bacterial outer membrane biogenesis; LPS lipid A biosynthesis. In terms of biological role, probably removes the 1-phosphate moiety from lipid A species. Does not seem to act on other membrane components, nor does it dephosphorylate the 4'-phosphate group of lipid A and/or lipid A precursors. The protein is Lipid A 1-phosphatase of Rhizobium etli (strain ATCC 51251 / DSM 11541 / JCM 21823 / NBRC 15573 / CFN 42).